We begin with the raw amino-acid sequence, 452 residues long: Coiled-coil domain-containing protein 71 (452 aa).

The disordered stretch occupies residues Pro-81–Ala-106. Positions Gln-87–Ala-106 are enriched in low complexity. A Phosphoserine modification is found at Ser-129. Disordered stretches follow at residues Pro-209–Ser-256 and Ala-322–Gly-404. Positions Lys-279 to Gln-344 form a coiled coil. The span at Lys-332–Gln-344 shows a compositional bias: low complexity. Basic and acidic residues predominate over residues Arg-377–Pro-386.

This Bos taurus (Bovine) protein is Coiled-coil domain-containing protein 71 (CCDC71).